The chain runs to 874 residues: Bifunctional uridylyltransferase/uridylyl-removing enzyme (874 aa).

The uridylyltransferase stretch occupies residues 1-332 (MTLQSPLTFR…NGGASEDAEI (332 aa)). The interval 333–692 (IDEDFQRRGA…ISKKATRGGT (360 aa)) is uridylyl-removing. In terms of domain architecture, HD spans 451–573 (VDEHSIRLLK…VRDEEYLEYL (123 aa)). ACT domains lie at 693 to 777 (EVFV…RTPN) and 800 to 874 (LMEF…SVSA).

This sequence belongs to the GlnD family. Mg(2+) serves as cofactor.

The enzyme catalyses [protein-PII]-L-tyrosine + UTP = [protein-PII]-uridylyl-L-tyrosine + diphosphate. It carries out the reaction [protein-PII]-uridylyl-L-tyrosine + H2O = [protein-PII]-L-tyrosine + UMP + H(+). With respect to regulation, uridylyltransferase (UTase) activity is inhibited by glutamine, while glutamine activates uridylyl-removing (UR) activity. Functionally, modifies, by uridylylation and deuridylylation, the PII regulatory proteins (GlnB and homologs), in response to the nitrogen status of the cell that GlnD senses through the glutamine level. Under low glutamine levels, catalyzes the conversion of the PII proteins and UTP to PII-UMP and PPi, while under higher glutamine levels, GlnD hydrolyzes PII-UMP to PII and UMP (deuridylylation). Thus, controls uridylylation state and activity of the PII proteins, and plays an important role in the regulation of nitrogen assimilation and metabolism. In Vibrio campbellii (strain ATCC BAA-1116), this protein is Bifunctional uridylyltransferase/uridylyl-removing enzyme.